A 276-amino-acid polypeptide reads, in one-letter code: Exosome complex component RRP43 (276 aa).

An N-acetylalanine modification is found at A2.

This sequence belongs to the RNase PH family. As to quaternary structure, component of the RNA exosome core complex (Exo-9), composed of EXOSC1, EXOSC2, EXOSC3, EXOSC4, EXOSC5, EXOSC6, EXOSC7, EXOSC8 and EXOSC9; within the complex interacts with EXOSC5 and EXOSC6. The catalytically inactive RNA exosome core complex (Exo-9) associates with the catalytic subunit EXOSC10/RRP6. Exo-9 may associate with DIS3 to form the nucleolar exosome complex, or DIS3L to form the cytoplasmic exosome complex. Exo-9 is formed by a hexameric base ring consisting of the heterodimers EXOSC4-EXOSC9, EXOSC5-EXOSC8 and EXOSC6-EXOSC7, and a cap ring consisting of EXOSC1, EXOSC2 and EXOSC3. The RNA exosome complex associates with cofactors C1D/RRP47, MPHOSPH6/MPP6 and MTREX/MTR4. Binds outer membrane protein opap from Neisseria gonorrhoeae.

Its subcellular location is the cytoplasm. It localises to the nucleus. The protein resides in the nucleolus. Its function is as follows. Non-catalytic component of the RNA exosome complex which has 3'-&gt;5' exoribonuclease activity and participates in a multitude of cellular RNA processing and degradation events. In the nucleus, the RNA exosome complex is involved in proper maturation of stable RNA species such as rRNA, snRNA and snoRNA, in the elimination of RNA processing by-products and non-coding 'pervasive' transcripts, such as antisense RNA species and promoter-upstream transcripts (PROMPTs), and of mRNAs with processing defects, thereby limiting or excluding their export to the cytoplasm. The RNA exosome may be involved in Ig class switch recombination (CSR) and/or Ig variable region somatic hypermutation (SHM) by targeting AICDA deamination activity to transcribed dsDNA substrates. In the cytoplasm, the RNA exosome complex is involved in general mRNA turnover and specifically degrades inherently unstable mRNAs containing AU-rich elements (AREs) within their 3' untranslated regions, and in RNA surveillance pathways, preventing translation of aberrant mRNAs. It seems to be involved in degradation of histone mRNA. The catalytic inactive RNA exosome core complex of 9 subunits (Exo-9) is proposed to play a pivotal role in the binding and presentation of RNA for ribonucleolysis, and to serve as a scaffold for the association with catalytic subunits and accessory proteins or complexes. EXOSC8 binds to ARE-containing RNAs. This chain is Exosome complex component RRP43 (EXOSC8), found in Homo sapiens (Human).